A 238-amino-acid chain; its full sequence is uncharacterized protein (238 aa).

This is an uncharacterized protein from Frog virus 3 (isolate Goorha) (FV-3).